Reading from the N-terminus, the 928-residue chain is DENN domain-containing protein 2C (928 aa).

Disordered regions lie at residues 67 to 105 and 245 to 266; these read KSKN…YDDT and QSSL…IRGR. Residues 85 to 105 show a composition bias toward basic and acidic residues; it reads ENTKSHDQSENENKKHEYDDT. A Phosphoserine modification is found at S271. The interval 428–456 is disordered; that stretch reads KLHSYTGKELPPTKGETSGNESDAEYLPK. The uDENN domain maps to 492 to 641; sequence ELFVVVSLQK…PFPAPGRTIT (150 aa). Residues 663–796 enclose the cDENN domain; sequence RLEHVDFKCL…LQAALMQILE (134 aa). Residues 798–888 enclose the dDENN domain; sequence RNEILTQEQN…QDRELRKSGV (91 aa).

Guanine nucleotide exchange factor (GEF) which may activate RAB9A and RAB9B. Promotes the exchange of GDP to GTP, converting inactive GDP-bound Rab proteins into their active GTP-bound form. The chain is DENN domain-containing protein 2C (DENND2C) from Homo sapiens (Human).